The primary structure comprises 148 residues: MKVIFTQDVKGKGKKGEVKDVPVGYANNFLFKKNVAVEATPGNLKQLQQQNKHAEQEREQEIEDAKALKKKLEDIEVEVTAKSGEGGKLFGSVSAKQIAQALQKQHDIKIDKRKMDLPNGIHALGYTNVPVKLDKEVDGTIRVHTVEQ.

Residues 46-65 are disordered; that stretch reads QLQQQNKHAEQEREQEIEDA. Basic and acidic residues predominate over residues 52–65; sequence KHAEQEREQEIEDA.

It belongs to the bacterial ribosomal protein bL9 family.

Functionally, binds to the 23S rRNA. The polypeptide is Large ribosomal subunit protein bL9 (Staphylococcus carnosus (strain TM300)).